Consider the following 193-residue polypeptide: DNA dC-&gt;dU-editing enzyme APOBEC-3H (193 aa).

The CMP/dCMP-type deaminase domain occupies 24-126; sequence YRRKTYLCYQ…WKYQQGLRHL (103 aa). Position 54 (histidine 54) interacts with Zn(2+). Glutamate 56 acts as the Proton donor in catalysis. 2 residues coordinate Zn(2+): cysteine 85 and cysteine 88.

This sequence belongs to the cytidine and deoxycytidylate deaminase family. In terms of assembly, homodimer. Zn(2+) is required as a cofactor. In terms of tissue distribution, expressed in peripheral blood mononuclear cells.

It is found in the cytoplasm. It carries out the reaction a 2'-deoxycytidine in single-stranded DNA + H2O + H(+) = a 2'-deoxyuridine in single-stranded DNA + NH4(+). Its function is as follows. DNA deaminase (cytidine deaminase) which acts as an inhibitor of retrovirus replication and retrotransposon mobility via deaminase-dependent and -independent mechanisms. Selectively targets single-stranded DNA and does not deaminate double-stranded DNA or single- or double-stranded RNA. Exhibits single-stranded DNA deaminase activity (in vitro). Incorporates into the released virions of the virion infectivity factor (vif)-deficient feline immunodeficiency virus (FIV) and suppresses FIV infectivity, probably in a deaminase-dependent manner (in vitro). Induces G-to-A hypermutations in vif-deficient FIV (in vitro). The APOBEC3H/APOBEC3Z3 haplotype 5 exhibits antiviral activity against vif-proficient FIV, strains Petaluma, C36 and Shizuoka (in vitro). Does not exhibit inhibitory activity against feline leukemia virus (FeLV), feline endogenous retrovirus (RD-114 virus) or a long interspersed nuclear element-1 (LINE-1) retrotransposon (in vitro). This Felis catus (Cat) protein is DNA dC-&gt;dU-editing enzyme APOBEC-3H.